Here is a 411-residue protein sequence, read N- to C-terminus: Glutamate dehydrogenase (411 aa).

Lys102 is a catalytic residue.

This sequence belongs to the Glu/Leu/Phe/Val dehydrogenases family.

It carries out the reaction L-glutamate + NAD(+) + H2O = 2-oxoglutarate + NH4(+) + NADH + H(+). It catalyses the reaction L-glutamate + NADP(+) + H2O = 2-oxoglutarate + NH4(+) + NADPH + H(+). The sequence is that of Glutamate dehydrogenase (GDH) from Vitis vinifera (Grape).